The chain runs to 346 residues: UDP-N-acetylenolpyruvoylglucosamine reductase (346 aa).

The FAD-binding PCMH-type domain maps to 18–189 (LRAQARAFIA…VSVVFALKTH (172 aa)). The active site involves Arg-165. Ser-240 serves as the catalytic Proton donor. The active site involves Glu-336.

Belongs to the MurB family. Requires FAD as cofactor.

The protein localises to the cytoplasm. The enzyme catalyses UDP-N-acetyl-alpha-D-muramate + NADP(+) = UDP-N-acetyl-3-O-(1-carboxyvinyl)-alpha-D-glucosamine + NADPH + H(+). The protein operates within cell wall biogenesis; peptidoglycan biosynthesis. Functionally, cell wall formation. This chain is UDP-N-acetylenolpyruvoylglucosamine reductase, found in Neisseria meningitidis serogroup C (strain 053442).